A 291-amino-acid polypeptide reads, in one-letter code: Shikimate dehydrogenase (NADP(+)) (291 aa).

Residues 18 to 20 (SLS) and threonine 70 each bind shikimate. Catalysis depends on lysine 74, which acts as the Proton acceptor. 2 residues coordinate shikimate: asparagine 95 and aspartate 110. Residues 134 to 138 (GAGGA) and valine 228 each bind NADP(+). Residue tyrosine 230 participates in shikimate binding. NADP(+) is bound at residue glycine 251.

This sequence belongs to the shikimate dehydrogenase family. As to quaternary structure, homodimer.

It carries out the reaction shikimate + NADP(+) = 3-dehydroshikimate + NADPH + H(+). Its pathway is metabolic intermediate biosynthesis; chorismate biosynthesis; chorismate from D-erythrose 4-phosphate and phosphoenolpyruvate: step 4/7. Its function is as follows. Involved in the biosynthesis of the chorismate, which leads to the biosynthesis of aromatic amino acids. Catalyzes the reversible NADPH linked reduction of 3-dehydroshikimate (DHSA) to yield shikimate (SA). This is Shikimate dehydrogenase (NADP(+)) from Streptomyces avermitilis (strain ATCC 31267 / DSM 46492 / JCM 5070 / NBRC 14893 / NCIMB 12804 / NRRL 8165 / MA-4680).